The sequence spans 996 residues: Conserved oligomeric Golgi complex subunit 7 (996 aa).

Disordered stretches follow at residues 533–571 (TPSS…NSVG), 828–867 (QQQE…DEDD), and 950–974 (QLHN…NTNN). The span at 557–571 (RSGSGSGNSNSNSVG) shows a compositional bias: low complexity. Basic and acidic residues predominate over residues 828 to 844 (QQQEQQEKEQQQEKEQQ). 2 stretches are compositionally biased toward low complexity: residues 849–858 (DININTNNNN) and 953–974 (NNNN…NTNN).

This sequence belongs to the COG7 family. Component of the conserved oligomeric Golgi complex which is composed of eight different subunits and is required for normal Golgi morphology and localization.

It is found in the golgi apparatus membrane. Required for normal Golgi function. In Dictyostelium discoideum (Social amoeba), this protein is Conserved oligomeric Golgi complex subunit 7 (cog7).